A 108-amino-acid chain; its full sequence is Ig kappa chain V-V region EPC 109 (108 aa).

Residues 1-23 are framework-1; it reads DVQMIQSPSSLSASLGDIVTMTC. Cysteine 23 and cysteine 88 are joined by a disulfide. The tract at residues 24–34 is complementarity-determining-1; it reads QASQGTNINLN. Positions 35–49 are framework-2; sequence WFQQKPGKAPKLLIY. Residues 50–56 are complementarity-determining-2; the sequence is GASILEA. Residues 57 to 88 are framework-3; sequence GVPSRFSGRRYGTDFTLTISSLEDEDMATYFC. Positions 89–97 are complementarity-determining-3; it reads LQHSYLPYT. A framework-4 region spans residues 98–108; that stretch reads FGGGTKLEKKR.

The sequence is that of Ig kappa chain V-V region EPC 109 from Mus musculus (Mouse).